The primary structure comprises 682 residues: Potassium-transporting ATPase ATP-binding subunit (682 aa).

4 helical membrane passes run 34–54 (PVMF…IAMA), 62–82 (ALFS…ANFA), 219–239 (IALT…TATL), and 254–274 (VLVA…LSAI). The active-site 4-aspartylphosphate intermediate is the D307. ATP-binding positions include D344, E348, 377 to 384 (FTAQSRMS), and K395. Positions 518 and 522 each coordinate Mg(2+). The next 3 helical transmembrane spans lie at 588–608 (FAII…LNIM), 616–636 (AILS…PLAL), and 656–676 (IYGL…DLLL).

The protein belongs to the cation transport ATPase (P-type) (TC 3.A.3) family. Type IA subfamily. In terms of assembly, the system is composed of three essential subunits: KdpA, KdpB and KdpC.

Its subcellular location is the cell inner membrane. The enzyme catalyses K(+)(out) + ATP + H2O = K(+)(in) + ADP + phosphate + H(+). In terms of biological role, part of the high-affinity ATP-driven potassium transport (or Kdp) system, which catalyzes the hydrolysis of ATP coupled with the electrogenic transport of potassium into the cytoplasm. This subunit is responsible for energy coupling to the transport system and for the release of the potassium ions to the cytoplasm. The polypeptide is Potassium-transporting ATPase ATP-binding subunit (Escherichia coli O9:H4 (strain HS)).